Reading from the N-terminus, the 365-residue chain is MLAVGAMEGPRQSAFLLSSPPLAALHSMAEMKTPLYPAAYPPLPTGPPSSSSSSSSSSSPSPPLGAHNPGGLKPPAAGGLSSLGSPPQQLSAATPHGINDILSRPSMPVASGAALPSASPSGSSSSSSSSASATSASAAAAAAAAAAAAAASSPAGLLAGLPRFSSLSPPPPPPGLYFSPSAAAVAAVGRYPKPLAELPGRTPIFWPGVMQSPPWRDARLACTPHQGSILLDKDGKRKHTRPTFSGQQIFALEKTFEQTKYLAGPERARLAYSLGMTESQVKVWFQNRRTKWRKKHAAEMATAKKKQDSETERLKGTSENEEDDDDYNKPLDPNSDDEKITQLLKKHKSSGGSLLLHASEAEGSS.

Residues 35–136 are disordered; it reads LYPAAYPPLP…SSSSASATSA (102 aa). 3 stretches are compositionally biased toward low complexity: residues 48–59, 69–92, and 110–136; these read PSSSSSSSSSSS, PGGL…QLSA, and ASGA…ATSA. Positions 102-269 are repressor domain; that stretch reads LSRPSMPVAS…KYLAGPERAR (168 aa). Arginine 190 is modified (asymmetric dimethylarginine). Positions 237–296 form a DNA-binding region, homeobox; it reads RKHTRPTFSGQQIFALEKTFEQTKYLAGPERARLAYSLGMTESQVKVWFQNRRTKWRKKH. Positions 295–365 are disordered; it reads KHAAEMATAK…LHASEAEGSS (71 aa). Positions 305-318 are enriched in basic and acidic residues; sequence KKQDSETERLKGTS. The tract at residues 307-365 is involved in DNA-binding; sequence QDSETERLKGTSENEEDDDDYNKPLDPNSDDEKITQLLKKHKSSGGSLLLHASEAEGSS.

Pancreatic beta cells.

The protein localises to the nucleus. Functionally, transcription factor which binds to specific A/T-rich DNA sequences in the promoter regions of a number of genes. Involved in the development of insulin-producing beta cells in the islets of Langerhans at the secondary transition. Together with NKX2-2 and IRX3 acts to restrict the generation of motor neurons to the appropriate region of the neural tube. Belongs to the class II proteins of neuronal progenitor factors, which are induced by SHH signals. The protein is Homeobox protein Nkx-6.1 (Nkx6-1) of Rattus norvegicus (Rat).